A 342-amino-acid polypeptide reads, in one-letter code: N-acetyl-gamma-glutamyl-phosphate reductase (342 aa).

Cys146 is an active-site residue.

The protein belongs to the NAGSA dehydrogenase family. Type 1 subfamily.

It is found in the cytoplasm. The enzyme catalyses N-acetyl-L-glutamate 5-semialdehyde + phosphate + NADP(+) = N-acetyl-L-glutamyl 5-phosphate + NADPH + H(+). It participates in amino-acid biosynthesis; L-arginine biosynthesis; N(2)-acetyl-L-ornithine from L-glutamate: step 3/4. Functionally, catalyzes the NADPH-dependent reduction of N-acetyl-5-glutamyl phosphate to yield N-acetyl-L-glutamate 5-semialdehyde. The chain is N-acetyl-gamma-glutamyl-phosphate reductase from Thermobifida fusca (strain YX).